Reading from the N-terminus, the 591-residue chain is L-fucose isomerase (591 aa).

Catalysis depends on proton acceptor residues glutamate 337 and aspartate 361. Glutamate 337, aspartate 361, and histidine 528 together coordinate Mn(2+).

The protein belongs to the L-fucose isomerase family. As to quaternary structure, homohexamer. Requires Mn(2+) as cofactor.

The protein resides in the cytoplasm. The enzyme catalyses L-fucose = L-fuculose. It functions in the pathway carbohydrate degradation; L-fucose degradation; L-lactaldehyde and glycerone phosphate from L-fucose: step 1/3. In terms of biological role, converts the aldose L-fucose into the corresponding ketose L-fuculose. In Escherichia coli (strain 55989 / EAEC), this protein is L-fucose isomerase.